The following is a 315-amino-acid chain: DNA-directed RNA polymerase subunit alpha (315 aa).

The tract at residues 1-228 (MLEIEKPKIE…EHFKLFMTLT (228 aa)) is alpha N-terminal domain (alpha-NTD). The tract at residues 245-315 (KEKVLEMTIE…LGLGLRKSED (71 aa)) is alpha C-terminal domain (alpha-CTD).

It belongs to the RNA polymerase alpha chain family. In terms of assembly, homodimer. The RNAP catalytic core consists of 2 alpha, 1 beta, 1 beta' and 1 omega subunit. When a sigma factor is associated with the core the holoenzyme is formed, which can initiate transcription.

It catalyses the reaction RNA(n) + a ribonucleoside 5'-triphosphate = RNA(n+1) + diphosphate. Functionally, DNA-dependent RNA polymerase catalyzes the transcription of DNA into RNA using the four ribonucleoside triphosphates as substrates. In Clostridium botulinum (strain Langeland / NCTC 10281 / Type F), this protein is DNA-directed RNA polymerase subunit alpha.